The primary structure comprises 366 residues: 3-dehydroquinate synthase (366 aa).

NAD(+) is bound by residues 71 to 76 (DGEKYK), 105 to 109 (GVIGD), 129 to 130 (TT), K142, K151, and 169 to 172 (TLQT). 3 residues coordinate Zn(2+): E184, H247, and H264.

It belongs to the sugar phosphate cyclases superfamily. Dehydroquinate synthase family. The cofactor is Co(2+). It depends on Zn(2+) as a cofactor. NAD(+) serves as cofactor.

The protein localises to the cytoplasm. It catalyses the reaction 7-phospho-2-dehydro-3-deoxy-D-arabino-heptonate = 3-dehydroquinate + phosphate. The protein operates within metabolic intermediate biosynthesis; chorismate biosynthesis; chorismate from D-erythrose 4-phosphate and phosphoenolpyruvate: step 2/7. Catalyzes the conversion of 3-deoxy-D-arabino-heptulosonate 7-phosphate (DAHP) to dehydroquinate (DHQ). This is 3-dehydroquinate synthase from Actinobacillus pleuropneumoniae serotype 5b (strain L20).